Here is a 986-residue protein sequence, read N- to C-terminus: MAPLKVHGPVRMRSMQTGITKWKEGSFEIVEKDNKVSLVVHYNVGGIPKTFQLSHNIKSVTLRPNGRKLCCLMLTLKDTSFLTIDKVPLKDANEMRMYLDAVHQDRVHTAGKPSQGSGSFGGVLGSRTTQKEANRQFSYIENQAPPKRVTVESKDETPFRKVLGTPARASVKNSSGTGAPSNRVNVAASPTSSVPHRTGLLESRSEKRKRAQPPSSEMSEDYPKENDSSTNNTAMSDPAWKYLNSSREKQLKLKQEEENRTSGVLPLQSSSYYGSRSSSKEYSTSSSTLDRSSVSSQTTSAKRSLGFLSQPAPLSVKKMRSNQDYTGWNKPRVPLSTHPQQQLQGFSNLGNTCYMNAILQSLFSIQSFANDLLKQGIPWKKIPLNALIRRFAHLLAKKDVSSPEVKKELLKKVKSAISATAERFSGYMQNDAHEFLSQCLDQLKEDMEKLNKTWKSEPVPNDDSSPGRASDDLSATKVYTCPVISNLEFEVQHSIICKTCGETVTKREQFNDLSIDLPRRKKLFPSRSIQDSLDLFFRAEEIEYSCEKCNGKSAVVTHKFNRLPRVLILHLKRYSFNVALSLNHKVGQQVVIPRYLTLLSHCTESTRLPLTLGWSAHSAISRPLKASQMVNSCTISTSTPCRKGRFLRKEGLSELRSSTGRKNLNRVHVFKEDVQDINSSLQVQRGIRKSSKRSKMEGDKPELGNAGFDGMSEDELLAAVLEISKREASLSLSHDEDKPTSSPDTGFGDDEIQELPENLETMETEKPKAPLESGPANFTEITKDFDENKENKTPEGSQGEVDWLQQYDMEREREEQELQQALAQSLQEQEAREQKEDDDLKRATELSLQEFNSSLLDSVGSDEDSGNEDVLDMEYSEAEAEELKRNAETGELPHSYRLISIVSHIGSTSSSGHYISDVYDIKKQSWFTYNDLEVSRTLETTVQCDRDRSGYIFFYMHKDIFDELLETEKNAQPLSMEVGRSIRQPL.

The KEN box 1 signature appears at 32 to 34 (KDN). 2 consecutive short sequence motifs (D-box) follow at residues 71–79 (CLMLTLKDT) and 96–105 (RMYLDAVHQD). Disordered regions lie at residues 134-238 (NRQF…MSDP) and 251-305 (LKLK…KRSL). A compositionally biased stretch (basic and acidic residues) spans 149–159 (VTVESKDETPF). Positions 160–168 (RKVLGTPAR) match the D-box 3 motif. The segment covering 171–195 (VKNSSGTGAPSNRVNVAASPTSSVP) has biased composition (polar residues). A KEN box 2 motif is present at residues 224–226 (KEN). The segment covering 251–260 (LKLKQEEENR) has biased composition (basic and acidic residues). Positions 269–298 (SSSYYGSRSSSKEYSTSSSTLDRSSVSSQT) are enriched in low complexity. Residues 344 to 958 (QGFSNLGNTC…SGYIFFYMHK (615 aa)) form the USP domain. The active-site Nucleophile is C353. 2 disordered regions span residues 683–710 (VQRGIRKSSKRSKMEGDKPELGNAGFDG) and 729–751 (SLSLSHDEDKPTSSPDTGFGDDE). The 20-residue stretch at 712 to 731 (SEDELLAAVLEISKREASLS) folds into the UIM 1 domain. Basic and acidic residues predominate over residues 729 to 739 (SLSLSHDEDKP). The KEN box 3 motif lies at 789-791 (KEN). The tract at residues 811-840 (REREEQELQQALAQSLQEQEAREQKEDDDL) is disordered. 2 UIM domains span residues 813–832 (REEQELQQALAQSLQEQEAR) and 835–854 (KEDDDLKRATELSLQEFNSS). A compositionally biased stretch (low complexity) spans 818 to 828 (LQQALAQSLQE). Positions 829–840 (QEAREQKEDDDL) are enriched in basic and acidic residues. The active-site Proton acceptor is the H913.

This sequence belongs to the peptidase C19 family.

The catalysed reaction is Thiol-dependent hydrolysis of ester, thioester, amide, peptide and isopeptide bonds formed by the C-terminal Gly of ubiquitin (a 76-residue protein attached to proteins as an intracellular targeting signal).. In terms of biological role, deubiquitinase that antagonizes the anaphase-promoting complex (APC/C) during G1/S transition by mediating deubiquitination of APC/C target proteins, thereby promoting S phase entry. Specifically mediates deubiquitination of 'Lys-11'-linked polyubiquitin chains, a specific ubiquitin-linkage type mediated by the APC/C complex. This is Ubiquitin carboxyl-terminal hydrolase 37 (USP37) from Gallus gallus (Chicken).